A 118-amino-acid polypeptide reads, in one-letter code: Large ribosomal subunit protein bL20c (118 aa).

Belongs to the bacterial ribosomal protein bL20 family.

The protein resides in the plastid. It localises to the chloroplast. Functionally, binds directly to 23S ribosomal RNA and is necessary for the in vitro assembly process of the 50S ribosomal subunit. It is not involved in the protein synthesizing functions of that subunit. The polypeptide is Large ribosomal subunit protein bL20c (Gracilaria tenuistipitata var. liui (Red alga)).